Here is a 385-residue protein sequence, read N- to C-terminus: Probable splicing factor YJU2B (385 aa).

Residues 1 to 26 (MGERKGQNKYYPPDFNPEKHGSLNRY) are disordered. Ser-40 is modified (phosphoserine). Positions 182 to 215 (LNSMLRRHFREKKKAMQEEEEKDQALQAKANLAI) form a coiled coil. A disordered region spans residues 256–385 (FPSAQGPSTS…VADYSDSESE (130 aa)). Residues 260–270 (QGPSTSSSKAS) are compositionally biased toward polar residues. Ser-306 carries the post-translational modification Phosphoserine. 2 stretches are compositionally biased toward polar residues: residues 307-316 (PQCTADNSLS) and 359-373 (GSSQ…TPNA).

It belongs to the CWC16 family.

The protein resides in the nucleus. In terms of biological role, may be involved in mRNA splicing. The protein is Probable splicing factor YJU2B of Rattus norvegicus (Rat).